Reading from the N-terminus, the 57-residue chain is uncharacterized protein (57 aa).

Helical transmembrane passes span valine 4–tryptophan 26 and alanine 33–leucine 55.

It localises to the cell membrane. This is an uncharacterized protein from Methanocaldococcus jannaschii (strain ATCC 43067 / DSM 2661 / JAL-1 / JCM 10045 / NBRC 100440) (Methanococcus jannaschii).